Consider the following 269-residue polypeptide: Mitochondrial scaffolding protein 1 (269 aa).

The 73-residue stretch at 49 to 121 folds into the PDZ domain; the sequence is VVEIEKTSKG…HDEAVEVFRS (73 aa). Residues 143 to 185 are disordered; that stretch reads RTQTPTASVSITPQVTPQTRSTQNNTDTPKSMSHSESKSRLTS. Residues 145-174 show a composition bias toward polar residues; that stretch reads QTPTASVSITPQVTPQTRSTQNNTDTPKSM. A helical transmembrane segment spans residues 240 to 262; that stretch reads WLTEALYVSIGLGALTISGYLAY.

It is found in the membrane. Plays a role in the regulation of lifespan in a partially daf-16-mediated manner, and may be involved in regulating the levels of reactive oxygen species production in response to heat stress. This chain is Mitochondrial scaffolding protein 1, found in Caenorhabditis elegans.